The sequence spans 666 residues: TATA box-binding protein-associated factor RNA polymerase I subunit B (666 aa).

An RRN7-type zinc finger spans residues 1–29 (MICTECENDAFDEEDDGYYYCQRCGVQVE). Residues cysteine 3, cysteine 6, cysteine 21, and cysteine 24 each contribute to the Zn(2+) site. The B-reader stretch occupies residues 30–64 (NLIQTGVDDGDLIGEGGGTQGALYNPKHRRTEPQP). Disordered regions lie at residues 45–110 (GGGT…VDKE) and 189–208 (DSEHQSEDGEVKDAKRLKRH). Residues 65-80 (ITPSQPRFTDDTSRYS) form a B-linker region. Positions 78–89 (RYSQFKSQFESE) are enriched in polar residues. The interval 81-285 (QFKSQFESEN…REQMGERSAA (205 aa)) is N-terminal cyclin fold. Basic and acidic residues-rich tracts occupy residues 90 to 110 (NGNKELPREVKRAPDSYVDKE) and 189 to 202 (DSEHQSEDGEVKDA). The segment at 286-288 (CPV) is C-terminal cyclin fold. The disordered stretch occupies residues 515-548 (SDGNNPCSSSSRRNESVSIGLDLSSSEHRESSSP). Residues 539 to 548 (SSEHRESSSP) show a composition bias toward basic and acidic residues.

The protein belongs to the RRN7/TAF1B family. In terms of assembly, interacts with TFIIF. Interacts with MEE14/CBP1, TBP1 and NRPB1 (via CTD). In terms of tissue distribution, expressed at high levels in seedlings, inflorescences and young siliques and at lower levels in roots. Not detected in leaves and stems. Detected in root tips and shoot apical meristems, in anthers, primarily in microspores with weaker expression in mature pollen grains and in the central cell of the mature female gametophyte. Not expressed in synergids, egg cells, antipodal cells, endosperm cells and fertilized egg cells.

The protein resides in the nucleus. It is found in the nucleolus. Component of RNA polymerase I core factor complex that acts as a GTF2B/TFIIB-like factor and plays a key role in multiple steps during transcription initiation such as pre-initiation complex (PIC) assembly and postpolymerase recruitment events in polymerase I (Pol I) transcription. Binds rDNA promoters and plays a role in Pol I recruitment. Required for the development of the one-cell zygote and endosperm in embryos. Required for micropylar pollen tube guidance, but has no effect on ovule development and gametophytic cell fate specification. May regulate the transcription of secreted cysteine-rich peptide (CRP) genes in the embryo sac. In Arabidopsis thaliana (Mouse-ear cress), this protein is TATA box-binding protein-associated factor RNA polymerase I subunit B.